A 367-amino-acid polypeptide reads, in one-letter code: Innexin inx2 (367 aa).

Residues 1-22 (MFDVFGSVKGLLKIDQVCIDNN) lie on the Cytoplasmic side of the membrane. The helical transmembrane segment at 23-43 (VFRMHYKATVIILIAFSLLVT) threads the bilayer. Topologically, residues 44–109 (SRQYIGDPID…EDEVKYHKYY (66 aa)) are extracellular. The chain crosses the membrane as a helical span at residues 110 to 130 (QWVCFVLFFQAILFYVPRYLW). The interaction with shg stretch occupies residues 130-179 (WKSWEGGRLKMLVMDLNSPIVNDECKNDRKKILVDYFIGNLNRHNFYAFR). Residues 131 to 179 (KSWEGGRLKMLVMDLNSPIVNDECKNDRKKILVDYFIGNLNRHNFYAFR) are Cytoplasmic-facing. The helical transmembrane segment at 180–200 (FFVCEALNFVNVIGQIYFVDF) threads the bilayer. At 201 to 266 (FLDGEFSTYG…VLPLNIVNEK (66 aa)) the chain is on the extracellular side. A helical transmembrane segment spans residues 267-287 (IYVFLWFWFIILSIMSGISLI). Residues 288–367 (YRIAVVAGPK…HSAHKRPFDA (80 aa)) are Cytoplasmic-facing.

This sequence belongs to the pannexin family. In terms of assembly, monomer and heterooligomer with ogre or Inx3 (via cytoplasmic C-terminal region). Interacts (via cytoplasmic loop) with shg (via cytoplasmic region). Interacts with arm. In terms of tissue distribution, in ovary, expressed in inner germarial sheath cells, prefollicular cells, follicle cells, nurse cells and oocytes. Expressed in embryonic epithelial cells. Expressed in foregut and hindgut from stage 11-17, segmentally repeated tracheal placodes at stage 14, salivary gland at stage 16 and proventriculus at stage 16-17 (at protein level). During germband extension stage (stage 7), expressed in epidermal epithelial cells. Expressed in cephalic furrow. Repeating epidermal pattern emerges at stage 11, refines to one or two cells at each side of the segment borders by stage 13. Expressed in the imaginal wing disk. In pupae, expressed in the CNS and in primary, secondary and tertiary pigment cells of the retina. Expressed in optic lamina of the adult CNS.

It localises to the cell membrane. The protein resides in the cell junction. It is found in the gap junction. The protein localises to the cytoplasm. Its subcellular location is the apical cell membrane. It localises to the apicolateral cell membrane. The protein resides in the basolateral cell membrane. It is found in the lateral cell membrane. In terms of biological role, structural components of the gap junctions. Involved in gap junctional communication between germline and somatic cells which is essential for normal oogenesis. In embryonic epidermis, required for epithelial morphogenesis. Required for keyhole formation during early stages of proventriculus development in response to wg signaling. In follicle cells, promotes the formation of egg chambers in part through regulation of shg and baz at the boundary between germ cells and follicle cells. In inner germarial sheath cells, required for survival of early germ cells and for cyst formation. The chain is Innexin inx2 (Inx2) from Drosophila melanogaster (Fruit fly).